The sequence spans 80 residues: Lantibiotic Flvalpha.b (80 aa).

The propeptide at 1–38 (MNKNPIYRSEEEAKNIACGNVAAELDENSQALDAINGA) is cleaved by FlvT. 2 positions are modified to 2,3-didehydrobutyrine; by FlvM1: Thr-43 and Thr-47. Residues 52–55 (TVGC) constitute a cross-link (beta-methyllanthionine (Thr-Cys); by FlvM1). The lanthionine (Ser-Cys); by FlvM1 cross-link spans 58 to 68 (SYGLGNGGYCC). 2 consecutive cross-links (beta-methyllanthionine (Thr-Cys); by FlvM1) follow at residues 69–74 (TYTVEC) and 71–78 (TVECSKTC).

The lanthionine formed by Ser-58 and Cys-68 forms a putative lipid II binding motif. Post-translationally, maturation of FlvA1 peptides involves the enzymatic conversion of Thr, and Ser into dehydrated AA and the formation of thioether bonds with cysteines. Modifications are processed by the flavecin synthetase FlvM1. This is followed by membrane translocation and cleavage of the modified precursor. In terms of processing, contains DL-lanthionine and DL-beta-methyllanthionine, when coepressed in E.coli with the flavecin synthetase FlvM1.

Its subcellular location is the secreted. Lanthionine-containing peptide antibiotic (lantibiotic) only active on Gram-positive bacteria in synergy with Flvbeta peptides, which are encoded by the same operon than Flvalpha.a. Shows antibacterial activity in synergy with Flvbeta.b, Flvbeta.c, Flvbeta.e and Flvbeta.g. Does not show antibacterial activity when tested with Flvbeta.a, Flvbeta.d, Flvbeta.f and Flvbeta.h. The bactericidal activity of lantibiotics is based on depolarization of energized bacterial cytoplasmic membranes, initiated by the formation of aqueous transmembrane pores. The sequence is that of Lantibiotic Flvalpha.b from Ruminococcus flavefaciens.